Reading from the N-terminus, the 624-residue chain is Histone-lysine N-methyltransferase, H3 lysine-9 specific SUVH4 (624 aa).

2 disordered regions span residues 1–25 (MAGK…VQKV) and 54–86 (DDTE…KGKQ). Residues 149 to 302 (GDLPGIDVGH…FTVYKYRLKR (154 aa)) enclose the YDG domain. In terms of domain architecture, Pre-SET spans 381–443 (TGCNCRGSCT…KCVNRTSQKR (63 aa)). Cys-383, Cys-385, Cys-389, Cys-395, Cys-397, Cys-425, Cys-429, Cys-431, and Cys-435 together coordinate Zn(2+). The region spanning 446 to 594 (FNLEVFRSAK…PMQELTYDYG (149 aa)) is the SET domain. Residues 456 to 458 (KGW), Tyr-493, Arg-548, and 551 to 552 (NH) each bind S-adenosyl-L-methionine. 4 residues coordinate Zn(2+): Cys-554, Cys-612, Cys-614, and Cys-619. In terms of domain architecture, Post-SET spans 608-624 (KQLACYCGALNCRKRLY).

The protein belongs to the class V-like SAM-binding methyltransferase superfamily. Histone-lysine methyltransferase family. Suvar3-9 subfamily. As to quaternary structure, interacts with H3 histone. As to expression, expressed in leaves stems and flowers.

Its subcellular location is the nucleus. The protein resides in the chromosome. It is found in the centromere. The catalysed reaction is N(6)-methyl-L-lysyl(9)-[histone H3] + S-adenosyl-L-methionine = N(6),N(6)-dimethyl-L-lysyl(9)-[histone H3] + S-adenosyl-L-homocysteine + H(+). It catalyses the reaction L-lysyl(9)-[histone H3] + S-adenosyl-L-methionine = N(6)-methyl-L-lysyl(9)-[histone H3] + S-adenosyl-L-homocysteine + H(+). Histone methyltransferase. Methylates 'Lys-9' of histone H3. H3 'Lys-9' methylation represents a specific tag for epigenetic transcriptional repression. The silencing mechanism via DNA CpNpG methylation requires the targeting of chromomethylase CMT3 to methylated histones, probably through an interaction with an HP1-like adapter. By its function, KYP is directly required for the maintenance of the DNA CpNpG and asymmetric methylation. Involved in the silencing of transposable elements. The polypeptide is Histone-lysine N-methyltransferase, H3 lysine-9 specific SUVH4 (SUVH4) (Arabidopsis thaliana (Mouse-ear cress)).